The following is a 122-amino-acid chain: Large ribosomal subunit protein uL14 (122 aa).

Belongs to the universal ribosomal protein uL14 family. In terms of assembly, part of the 50S ribosomal subunit. Forms a cluster with proteins L3 and L19. In the 70S ribosome, L14 and L19 interact and together make contacts with the 16S rRNA in bridges B5 and B8.

Binds to 23S rRNA. Forms part of two intersubunit bridges in the 70S ribosome. The sequence is that of Large ribosomal subunit protein uL14 from Streptomyces avermitilis (strain ATCC 31267 / DSM 46492 / JCM 5070 / NBRC 14893 / NCIMB 12804 / NRRL 8165 / MA-4680).